The primary structure comprises 2587 residues: Protein KINKY POLLEN (2587 aa).

The signal sequence occupies residues 1–27 (MAAFLVMFIFTIALFVALLWVFFKSLP). A glycan (N-linked (GlcNAc...) asparagine) is linked at N71. Residues 103 to 124 (PSHSSKGPRKPKTRKSSSGGKG) form a disordered region. Residues 108-117 (KGPRKPKTRK) show a composition bias toward basic residues. N-linked (GlcNAc...) asparagine glycosylation is found at N262, N281, and N485. A disordered region spans residues 270–290 (SKGEVIDSSSGNTTSEKPPKQ). Over residues 276–285 (DSSSGNTTSE) the composition is skewed to polar residues. The interval 589–611 (GSSSKNKQEKGAHRSKPPSGRGT) is disordered. A coiled-coil region spans residues 691–716 (TLNKEIQSTQVELETAKAIYQEFLEE). The disordered stretch occupies residues 784–814 (QHGNRNPEEASTVTGDKQKEEPTTTPNSLDK). N1155, N1250, N1281, and N1486 each carry an N-linked (GlcNAc...) asparagine glycan. Disordered regions lie at residues 1571-1608 (HCSK…KHPD), 1646-1673 (VDAR…DGYN), and 1729-1797 (EGNQ…PEEE). Over residues 1576–1590 (AQMSRTSSLSGSTDR) the composition is skewed to polar residues. A glycan (N-linked (GlcNAc...) asparagine) is linked at N1595. The span at 1646-1666 (VDARSTKEKQSEPEENSHSDP) shows a compositional bias: basic and acidic residues. Residues 1746–1760 (KQPSTGSGNLASQSK) show a composition bias toward polar residues. N-linked (GlcNAc...) asparagine glycosylation is found at N1861, N1951, N1981, N2036, and N2278. Residues 2006-2036 (IEEVELAKIELEAKERDRMMLLDDIRKLTQN) adopt a coiled-coil conformation. Positions 2274 to 2287 (QGSKNQSLKSSTIR) are enriched in polar residues. 3 disordered regions span residues 2274 to 2299 (QGSK…TSSF), 2319 to 2360 (SMEH…KKSR), and 2442 to 2469 (KDDI…RPGD). Basic and acidic residues-rich tracts occupy residues 2289–2299 (SGRELRRTSSF), 2322–2336 (HQGE…DSKT), 2343–2359 (SVHE…DKKS), and 2442–2458 (KDDI…RTDQ). 2 N-linked (GlcNAc...) asparagine glycosylation sites follow: N2513 and N2544. The disordered stretch occupies residues 2533–2587 (IRRHSKKFQNQNTTKGSKKTQLSPTLSPPKEEDQYESDSSSGSSAYEEFLDQNQI). The span at 2540 to 2557 (FQNQNTTKGSKKTQLSPT) shows a compositional bias: polar residues. The span at 2569–2579 (SDSSSGSSAYE) shows a compositional bias: low complexity.

The protein belongs to the SABRE family. Mostly expressed in pollen and roots, especially in tip-growing cells, but also present in seedlings, stems, leaves, buds, flowers, siliques and seeds.

The protein resides in the secreted. It localises to the golgi apparatus. Functionally, may be involved in membrane trafficking. Required for tip growth in pollen tubes and root hairs. This is Protein KINKY POLLEN from Arabidopsis thaliana (Mouse-ear cress).